The sequence spans 128 residues: Small ribosomal subunit protein uS9 (128 aa).

Positions 106 to 128 (PRVVERKKPGRPKARKRFQFSKR) are disordered. Positions 113–128 (KPGRPKARKRFQFSKR) are enriched in basic residues.

Belongs to the universal ribosomal protein uS9 family.

The sequence is that of Small ribosomal subunit protein uS9 from Porphyromonas gingivalis (strain ATCC 33277 / DSM 20709 / CIP 103683 / JCM 12257 / NCTC 11834 / 2561).